The chain runs to 25 residues: Galactose-binding lectin-2 (25 aa).

As to quaternary structure, homodimer. N-glycosylated.

Its function is as follows. D-galactose specific lectin. Binds in decreasing order of affinity: melibiose, N-acetyllactosamine, D-galacturonic acid, D-galactose, methyl-alpha-D-galactoside, D-galactose, methyl-alpha-D-galactopyranoside, methyl-beta-D-galactopyranoside and lactose. Binds also the glycoproteins globotriose, asialofetuin and mucin. Possesses glycan-dependent cytotoxic activity against Burkitt's lymphoma Raji cells and erythroleukemia K562 cells. Has calcium-independent hemagglutinating activity towards human erythrocytes. The sequence is that of Galactose-binding lectin-2 from Aplysia kurodai (Kuroda's sea hare).